Reading from the N-terminus, the 580-residue chain is Frizzled-10-B (580 aa).

Residues 1 to 20 (MEPRVVTALLLSLAAALCSG) form the signal peptide. Topologically, residues 21–224 (ISSINPDRSG…DVYWSKNDKK (204 aa)) are extracellular. Residues 29–150 (SGEGRCQAIE…NDPNYLCMEA (122 aa)) form the FZ domain. 5 disulfides stabilise this stretch: C34–C95, C42–C88, C79–C117, C106–C147, and C110–C134. N48 is a glycosylation site (N-linked (GlcNAc...) asparagine). N153 is a glycosylation site (N-linked (GlcNAc...) asparagine). The tract at residues 173–194 (RPNSGHEMYPKDPKGRSSCENS) is disordered. The segment covering 180–189 (MYPKDPKGRS) has biased composition (basic and acidic residues). The helical transmembrane segment at 225–245 (FAFIWIAIWSLLCFFSSAFTV) threads the bilayer. Topologically, residues 246–261 (LTFLVDPLRFKYPERP) are cytoplasmic. Residues 262–282 (IIFLSMCYCVYSVGYIIRLFA) traverse the membrane as a helical segment. The Extracellular segment spans residues 283 to 309 (GADSIACDRDSGQLYVIQEGLESTGCT). The helical transmembrane segment at 310–330 (IVFLILYYFGMASSLWWVILT) threads the bilayer. Residues 331-350 (LTWFLAAGKKWGHEAIEANS) are Cytoplasmic-facing. A helical membrane pass occupies residues 351–371 (SYFHLAAWAIPAVKTIMILVM). The Extracellular segment spans residues 372-392 (RRVAGDELTGVCYVGSMDVNA). A helical membrane pass occupies residues 393 to 413 (LTGFVLIPLACYLIIGTSFIL). Topologically, residues 414–442 (SGFVALFHIRRVMKTGGENTDKLEKLMVR) are cytoplasmic. A helical membrane pass occupies residues 443–463 (IGVFSVLYTVPATCVIACYFY). Over 464 to 501 (ERLNMDFWKILATQDKCKMDSQTKTLDCTMTSSIPAVE) the chain is Extracellular. A helical membrane pass occupies residues 502-522 (IFMVKIFMLLVVGITSGMWIW). At 523–580 (TSKTVQSWQNVFSKSLKKRNRNKPASVITSAGIYKKPQQPPKIHHGKYESALRSPTCV) the chain is on the cytoplasmic side. The short motif at 525 to 530 (KTVQSW) is the Lys-Thr-X-X-X-Trp motif, mediates interaction with the PDZ domain of Dvl family members element. Residues 558 to 580 (KPQQPPKIHHGKYESALRSPTCV) form a disordered region. A PDZ-binding motif is present at residues 578–580 (TCV).

It belongs to the G-protein coupled receptor Fz/Smo family. In terms of tissue distribution, expressed in liver, lung, brain, testis, heart and ovary.

It is found in the cell membrane. Receptor for Wnt proteins. Most of frizzled receptors are coupled to the beta-catenin canonical signaling pathway, which leads to the activation of disheveled proteins, inhibition of GSK-3 kinase, nuclear accumulation of beta-catenin and activation of Wnt target genes. A second signaling pathway involving PKC and calcium fluxes has been seen for some family members, but it is not yet clear if it represents a distinct pathway or if it can be integrated in the canonical pathway, as PKC seems to be required for Wnt-mediated inactivation of GSK-3 kinase. Both pathways seem to involve interactions with G-proteins. May be involved in transduction and intercellular transmission of polarity information during tissue morphogenesis and/or in differentiated tissues. Activated by Wnt8. Could have an antagonizing activity in the morphogenesis during development. This is Frizzled-10-B (fzd10-b) from Xenopus laevis (African clawed frog).